The following is a 468-amino-acid chain: ATP synthase subunit beta (468 aa).

155-162 provides a ligand contact to ATP; it reads GGAGVGKT.

This sequence belongs to the ATPase alpha/beta chains family. As to quaternary structure, F-type ATPases have 2 components, CF(1) - the catalytic core - and CF(0) - the membrane proton channel. CF(1) has five subunits: alpha(3), beta(3), gamma(1), delta(1), epsilon(1). CF(0) has three main subunits: a(1), b(2) and c(9-12). The alpha and beta chains form an alternating ring which encloses part of the gamma chain. CF(1) is attached to CF(0) by a central stalk formed by the gamma and epsilon chains, while a peripheral stalk is formed by the delta and b chains.

It is found in the cell membrane. The enzyme catalyses ATP + H2O + 4 H(+)(in) = ADP + phosphate + 5 H(+)(out). Its function is as follows. Produces ATP from ADP in the presence of a proton gradient across the membrane. The catalytic sites are hosted primarily by the beta subunits. This is ATP synthase subunit beta from Streptococcus thermophilus (strain ATCC BAA-250 / LMG 18311).